Consider the following 460-residue polypeptide: A-type ATP synthase subunit B (460 aa).

The protein belongs to the ATPase alpha/beta chains family. Has multiple subunits with at least A(3), B(3), C, D, E, F, H, I and proteolipid K(x).

It is found in the cell membrane. Component of the A-type ATP synthase that produces ATP from ADP in the presence of a proton gradient across the membrane. The B chain is a regulatory subunit. This chain is A-type ATP synthase subunit B, found in Thermoplasma volcanium (strain ATCC 51530 / DSM 4299 / JCM 9571 / NBRC 15438 / GSS1).